The following is a 177-amino-acid chain: Nucleoside triphosphate/diphosphate phosphatase (177 aa).

Arg23 acts as the Proton donor in catalysis. Mg(2+) is bound by residues Asn87, Asp103, Asp105, Asp107, Asp120, and Glu123.

It belongs to the Ntdp family. It depends on Mg(2+) as a cofactor.

The catalysed reaction is a ribonucleoside 5'-triphosphate + H2O = a ribonucleoside 5'-diphosphate + phosphate + H(+). It carries out the reaction a ribonucleoside 5'-diphosphate + H2O = a ribonucleoside 5'-phosphate + phosphate + H(+). In terms of biological role, has nucleoside phosphatase activity towards nucleoside triphosphates and nucleoside diphosphates. The chain is Nucleoside triphosphate/diphosphate phosphatase from Streptococcus pneumoniae serotype 2 (strain D39 / NCTC 7466).